Reading from the N-terminus, the 264-residue chain is Hemin import ATP-binding protein HmuV (264 aa).

The ABC transporter domain maps to 2–242; the sequence is IEAVNICVQR…QNLSDAYHCS (241 aa). Residue 34–41 coordinates ATP; that stretch reads GPNGSGKS.

The protein belongs to the ABC transporter superfamily. Heme (hemin) importer (TC 3.A.1.14.5) family. As to quaternary structure, the complex is composed of two ATP-binding proteins (HmuV), two transmembrane proteins (HmuU) and a solute-binding protein (HmuT).

It localises to the cell inner membrane. Its function is as follows. Part of the ABC transporter complex HmuTUV involved in hemin import. Responsible for energy coupling to the transport system. The sequence is that of Hemin import ATP-binding protein HmuV from Bartonella quintana (strain Toulouse) (Rochalimaea quintana).